Consider the following 171-residue polypeptide: NADH-quinone oxidoreductase subunit C (171 aa).

It belongs to the complex I 30 kDa subunit family. NDH-1 is composed of 14 different subunits. Subunits NuoB, C, D, E, F, and G constitute the peripheral sector of the complex.

The protein resides in the cell membrane. It carries out the reaction a quinone + NADH + 5 H(+)(in) = a quinol + NAD(+) + 4 H(+)(out). Functionally, NDH-1 shuttles electrons from NADH, via FMN and iron-sulfur (Fe-S) centers, to quinones in the respiratory chain. The immediate electron acceptor for the enzyme in this species is believed to be ubiquinone. Couples the redox reaction to proton translocation (for every two electrons transferred, four hydrogen ions are translocated across the cytoplasmic membrane), and thus conserves the redox energy in a proton gradient. The sequence is that of NADH-quinone oxidoreductase subunit C from Herpetosiphon aurantiacus (strain ATCC 23779 / DSM 785 / 114-95).